The sequence spans 474 residues: Proline--tRNA ligase (474 aa).

The protein belongs to the class-II aminoacyl-tRNA synthetase family. ProS type 3 subfamily. Homodimer.

It localises to the cytoplasm. It carries out the reaction tRNA(Pro) + L-proline + ATP = L-prolyl-tRNA(Pro) + AMP + diphosphate. Its function is as follows. Catalyzes the attachment of proline to tRNA(Pro) in a two-step reaction: proline is first activated by ATP to form Pro-AMP and then transferred to the acceptor end of tRNA(Pro). The chain is Proline--tRNA ligase from Phytoplasma australiense.